We begin with the raw amino-acid sequence, 918 residues long: Nitrate reductase [NADH] (918 aa).

The interval 25 to 44 (KNGPNHRADSPVRGCNFPNS) is disordered. A Mo-molybdopterin-binding site is contributed by Cys195. In terms of domain architecture, Cytochrome b5 heme-binding spans 543–618 (SNTYTLSEVK…LEDYRIGELI (76 aa)). 2 residues coordinate heme: His578 and His601. The 114-residue stretch at 661 to 774 (NEKIPCKLIS…KGPLGHIEYT (114 aa)) folds into the FAD-binding FR-type domain. Residues 714–717 (RAYT), 731–735 (VVKVY), Phe736, Phe743, 748–750 (IMS), and Thr801 contribute to the FAD site.

The protein belongs to the nitrate reductase family. Homodimer. The cofactor is FAD. It depends on heme as a cofactor. Requires Mo-molybdopterin as cofactor.

The enzyme catalyses nitrite + NAD(+) + H2O = nitrate + NADH + H(+). Nitrate reductase is a key enzyme involved in the first step of nitrate assimilation in plants, fungi and bacteria. In Cucurbita maxima (Pumpkin), this protein is Nitrate reductase [NADH].